Reading from the N-terminus, the 366-residue chain is Growth/differentiation factor 3 (366 aa).

A signal peptide spans 1–22 (MQPYQRLLALGFLLLTLPWGQT). The propeptide occupies 23–252 (SEFQDSDLLQ…HCHPSSRKRR (230 aa)). N-linked (GlcNAc...) asparagine glycans are attached at residues N113 and N308. Cystine bridges form between C266/C331, C295/C363, and C299/C365.

Belongs to the TGF-beta family. As to quaternary structure, homodimer. Heterodimer (Potential). But, in contrast to other members of this family, cannot be disulfide-linked. Post-translationally, synthesized as large precursor molecule that undergo proteolytic cleavage, releasing the pro-domain from the active, receptor binding, C-terminal region of the molecule. Primarily in adult bone marrow, spleen, thymus and adipose tissue.

The protein resides in the secreted. The protein localises to the cytoplasm. Functionally, growth factor involved in early embryonic development and adipose-tissue homeostasis. During embryogenesis controls formation of anterior visceral endoderm and mesoderm and the establishment of anterior-posterior identity through a receptor complex comprising the receptor ACVR1B and the coreceptor CRIPTO. Regulates adipose-tissue homeostasis and energy balance under nutrient overload in part by signaling through the receptor complex based on ACVR1C and CRIPTO. This chain is Growth/differentiation factor 3 (Gdf3), found in Mus musculus (Mouse).